The chain runs to 197 residues: Segregation and condensation protein B (197 aa).

The protein belongs to the ScpB family. Homodimer. Homodimerization may be required to stabilize the binding of ScpA to the Smc head domains. Component of a cohesin-like complex composed of ScpA, ScpB and the Smc homodimer, in which ScpA and ScpB bind to the head domain of Smc. The presence of the three proteins is required for the association of the complex with DNA.

It is found in the cytoplasm. In terms of biological role, participates in chromosomal partition during cell division. May act via the formation of a condensin-like complex containing Smc and ScpA that pull DNA away from mid-cell into both cell halves. This is Segregation and condensation protein B from Malacoplasma penetrans (strain HF-2) (Mycoplasma penetrans).